A 186-amino-acid polypeptide reads, in one-letter code: Protein Syd (186 aa).

Belongs to the Syd family.

The protein localises to the cell inner membrane. Its function is as follows. Interacts with the SecY protein in vivo. May bind preferentially to an uncomplexed state of SecY, thus functioning either as a chelating agent for excess SecY in the cell or as a regulatory factor that negatively controls the translocase function. This chain is Protein Syd, found in Erwinia tasmaniensis (strain DSM 17950 / CFBP 7177 / CIP 109463 / NCPPB 4357 / Et1/99).